Here is a 1149-residue protein sequence, read N- to C-terminus: Tape measure protein (1149 aa).

A run of 8 helical transmembrane segments spans residues 389 to 409, 431 to 451, 561 to 581, 689 to 709, 726 to 746, 781 to 801, 840 to 860, and 865 to 885; these read VVIFAGMVAALGPLLLIAGMV, MGTIAGVIAIFYALVAVFMIA, LAFLGITGPLGIAISLLVSFL, AAVQIITALFNGLVQALPTLI, ALPAIIQAAVQIIMSLVQALI, ILMALIEGLIQVLPELITAAI, LIAGALQIMMALLKAVIDFVP, and AGVQLLKALIQGIASLLGSLL. The segment at 1084-1109 is disordered; sequence RVDLFNTGSDNPNQPQSQSKNNQGEQ. Over residues 1094–1106 the composition is skewed to low complexity; the sequence is NPNQPQSQSKNNQ.

Its subcellular location is the host membrane. The protein localises to the virion. Its function is as follows. Plays a role in virion tail formation. The length of the tape measure protein is proportional to the length of the phage's tail. The polypeptide is Tape measure protein (TMP) (Streptococcus pneumoniae (Bacteriophage Dp-1)).